Reading from the N-terminus, the 486-residue chain is Bifunctional protein HldE (486 aa).

Residues 1-329 are ribokinase; the sequence is MSSRLSGLLD…AALSVAGPVG (329 aa). An ATP-binding site is contributed by 204–207; sequence NAFE. The active site involves D274. The interval 355–486 is cytidylyltransferase; it reads FTNGCFDILH…AIIARSETGK (132 aa).

In the N-terminal section; belongs to the carbohydrate kinase PfkB family. The protein in the C-terminal section; belongs to the cytidylyltransferase family. In terms of assembly, homodimer.

It carries out the reaction D-glycero-beta-D-manno-heptose 7-phosphate + ATP = D-glycero-beta-D-manno-heptose 1,7-bisphosphate + ADP + H(+). It catalyses the reaction D-glycero-beta-D-manno-heptose 1-phosphate + ATP + H(+) = ADP-D-glycero-beta-D-manno-heptose + diphosphate. It participates in nucleotide-sugar biosynthesis; ADP-L-glycero-beta-D-manno-heptose biosynthesis; ADP-L-glycero-beta-D-manno-heptose from D-glycero-beta-D-manno-heptose 7-phosphate: step 1/4. Its pathway is nucleotide-sugar biosynthesis; ADP-L-glycero-beta-D-manno-heptose biosynthesis; ADP-L-glycero-beta-D-manno-heptose from D-glycero-beta-D-manno-heptose 7-phosphate: step 3/4. Functionally, catalyzes the phosphorylation of D-glycero-D-manno-heptose 7-phosphate at the C-1 position to selectively form D-glycero-beta-D-manno-heptose-1,7-bisphosphate. Its function is as follows. Catalyzes the ADP transfer from ATP to D-glycero-beta-D-manno-heptose 1-phosphate, yielding ADP-D-glycero-beta-D-manno-heptose. The sequence is that of Bifunctional protein HldE from Hyphomonas neptunium (strain ATCC 15444).